The primary structure comprises 353 residues: Ribosome biogenesis protein BRX1 homolog (353 aa).

Over residues M1–G10 the composition is skewed to basic residues. The interval M1–R46 is disordered. A Brix domain is found at E60–G249. K160 is covalently cross-linked (Glycyl lysine isopeptide (Lys-Gly) (interchain with G-Cter in SUMO2)). Phosphoserine is present on S261. At K276 the chain carries N6-acetyllysine. Residues K314 and K322 each participate in a glycyl lysine isopeptide (Lys-Gly) (interchain with G-Cter in SUMO2) cross-link.

It belongs to the BRX1 family.

It is found in the nucleus. Its subcellular location is the nucleolus. Functionally, required for biogenesis of the 60S ribosomal subunit. The chain is Ribosome biogenesis protein BRX1 homolog (BRIX1) from Bos taurus (Bovine).